The following is a 281-amino-acid chain: Protein phosphatase 2C homolog 1 (281 aa).

Residues 20 to 281 enclose the PPM-type phosphatase domain; the sequence is RVGVAENKNS…DNVTVMVVFL (262 aa). Residues Asp58, Gly59, Asp233, and Asp272 each contribute to the Mn(2+) site.

The protein belongs to the PP2C family. As to quaternary structure, interacts with NBP2 and PBS2. It depends on Mg(2+) as a cofactor. Mn(2+) serves as cofactor.

It localises to the peroxisome. It catalyses the reaction O-phospho-L-seryl-[protein] + H2O = L-seryl-[protein] + phosphate. It carries out the reaction O-phospho-L-threonyl-[protein] + H2O = L-threonyl-[protein] + phosphate. Functionally, serine and threonine phosphatase. Involved in tRNA splicing and cell separation. This chain is Protein phosphatase 2C homolog 1 (PTC1), found in Saccharomyces cerevisiae (strain ATCC 204508 / S288c) (Baker's yeast).